Here is a 417-residue protein sequence, read N- to C-terminus: Gamma-glutamyl phosphate reductase (417 aa).

This sequence belongs to the gamma-glutamyl phosphate reductase family.

The protein resides in the cytoplasm. It catalyses the reaction L-glutamate 5-semialdehyde + phosphate + NADP(+) = L-glutamyl 5-phosphate + NADPH + H(+). It functions in the pathway amino-acid biosynthesis; L-proline biosynthesis; L-glutamate 5-semialdehyde from L-glutamate: step 2/2. Catalyzes the NADPH-dependent reduction of L-glutamate 5-phosphate into L-glutamate 5-semialdehyde and phosphate. The product spontaneously undergoes cyclization to form 1-pyrroline-5-carboxylate. In Meiothermus ruber, this protein is Gamma-glutamyl phosphate reductase.